A 317-amino-acid chain; its full sequence is Ferrochelatase (317 aa).

Residues His187 and Glu268 each coordinate Fe cation.

The protein belongs to the ferrochelatase family.

It localises to the cytoplasm. The catalysed reaction is heme b + 2 H(+) = protoporphyrin IX + Fe(2+). The protein operates within porphyrin-containing compound metabolism; protoheme biosynthesis; protoheme from protoporphyrin-IX: step 1/1. Catalyzes the ferrous insertion into protoporphyrin IX. This chain is Ferrochelatase, found in Campylobacter concisus (strain 13826).